Consider the following 576-residue polypeptide: POU domain, class 6, transcription factor 1 (576 aa).

Residues 65 to 88 form a disordered region; that stretch reads PAEAGSCDPDHSAEATVAARSPSE. The region spanning 414-488 is the POU-specific domain; the sequence is EDGINLEEIR…VLEKWLMEAE (75 aa). Residues 509–568 constitute a DNA-binding region (homeobox); sequence KRKRRTSFTPQAIEALNAYFEKNPLPTGQEITEIAKELNYDREVVRVWFCNRRQTLKNTS.

It belongs to the POU transcription factor family. Class-6 subfamily. Isoform C1 and isoform C2 are found in the brain, while isoform C7 is found in the testis.

The protein localises to the nucleus. In terms of biological role, transcription factor that binds preferentially to a variant of the octamer motif (5'-ATGATAAT-3'). The polypeptide is POU domain, class 6, transcription factor 1 (Pou6f1) (Mus musculus (Mouse)).